The primary structure comprises 442 residues: UDP-N-acetylmuramoylalanine--D-glutamate ligase (442 aa).

The protein belongs to the MurCDEF family.

The protein resides in the cytoplasm. It carries out the reaction UDP-N-acetyl-alpha-D-muramoyl-L-alanine + D-glutamate + ATP = UDP-N-acetyl-alpha-D-muramoyl-L-alanyl-D-glutamate + ADP + phosphate + H(+). Its pathway is cell wall biogenesis; peptidoglycan biosynthesis. Its function is as follows. Cell wall formation. Catalyzes the addition of glutamate to the nucleotide precursor UDP-N-acetylmuramoyl-L-alanine (UMA). This Buchnera aphidicola subsp. Baizongia pistaciae (strain Bp) protein is UDP-N-acetylmuramoylalanine--D-glutamate ligase.